A 99-amino-acid chain; its full sequence is Sec-independent protein translocase protein TatA (99 aa).

A helical membrane pass occupies residues 1–21 (MIGNLKPLEIVLIIAVILLLF). The segment at 46–99 (AMKKDDAATAAPTTETVADDTVPPQSTTARTIQAAPGDVTSSRPVSEAKPTTQS) is disordered. The segment covering 53–69 (ATAAPTTETVADDTVPP) has biased composition (low complexity). Over residues 84-99 (VTSSRPVSEAKPTTQS) the composition is skewed to polar residues.

The protein belongs to the TatA/E family. The Tat system comprises two distinct complexes: a TatABC complex, containing multiple copies of TatA, TatB and TatC subunits, and a separate TatA complex, containing only TatA subunits. Substrates initially bind to the TatABC complex, which probably triggers association of the separate TatA complex to form the active translocon.

It localises to the cell membrane. Its function is as follows. Part of the twin-arginine translocation (Tat) system that transports large folded proteins containing a characteristic twin-arginine motif in their signal peptide across membranes. TatA could form the protein-conducting channel of the Tat system. This is Sec-independent protein translocase protein TatA from Streptomyces griseus subsp. griseus (strain JCM 4626 / CBS 651.72 / NBRC 13350 / KCC S-0626 / ISP 5235).